The primary structure comprises 307 residues: Ribosomal protein L11 methyltransferase (307 aa).

The S-adenosyl-L-methionine site is built by threonine 162, glycine 183, aspartate 205, and asparagine 244.

Belongs to the methyltransferase superfamily. PrmA family.

It is found in the cytoplasm. The enzyme catalyses L-lysyl-[protein] + 3 S-adenosyl-L-methionine = N(6),N(6),N(6)-trimethyl-L-lysyl-[protein] + 3 S-adenosyl-L-homocysteine + 3 H(+). Methylates ribosomal protein L11. The polypeptide is Ribosomal protein L11 methyltransferase (Bordetella bronchiseptica (strain ATCC BAA-588 / NCTC 13252 / RB50) (Alcaligenes bronchisepticus)).